Consider the following 27-residue polypeptide: Conotoxin Lo6/7b (27 aa).

3 cysteine pairs are disulfide-bonded: cysteine 2–cysteine 16, cysteine 9–cysteine 19, and cysteine 15–cysteine 26. Tyrosine 27 carries the tyrosine amide modification.

As to expression, expressed by the venom duct.

The protein resides in the secreted. Its function is as follows. 1 uM of this toxin does not show any effect on voltage-gated sodium and potassium channels. Does not show antibacterial activity on both Gram-negative and Gram-positive bacteria. In Conasprella longurionis (Cone snail), this protein is Conotoxin Lo6/7b.